A 131-amino-acid polypeptide reads, in one-letter code: Two-component response regulator ORR3 (131 aa).

The 118-residue stretch at 12 to 129 folds into the Response regulatory domain; that stretch reads HVLAVDDSIV…DVSRLCNRVI (118 aa). Asp-62 carries the post-translational modification 4-aspartylphosphate.

Belongs to the ARR family. Type-A subfamily. Post-translationally, two-component system major event consists of a His-to-Asp phosphorelay between a sensor histidine kinase (HK) and a response regulator (RR). In plants, the His-to-Asp phosphorelay involves an additional intermediate named Histidine-containing phosphotransfer protein (HPt). This multistep phosphorelay consists of a His-Asp-His-Asp sequential transfer of a phosphate group between first a His and an Asp of the HK protein, followed by the transfer to a conserved His of the HPt protein and finally the transfer to an Asp in the receiver domain of the RR protein. As to expression, expressed in roots, mature leaves and flowers, and at low levels in shoots.

Functions as a response regulator involved in His-to-Asp phosphorelay signal transduction system. Phosphorylation of the Asp residue in the receiver domain activates the ability of the protein to promote the transcription of target genes. Type-A response regulators seem to act as negative regulators of the cytokinin signaling. The sequence is that of Two-component response regulator ORR3 from Oryza sativa subsp. indica (Rice).